The following is a 168-amino-acid chain: Histone doublet miniH2B-H2A (168 aa).

Its subcellular location is the host nucleus. The protein localises to the host cytoplasm. The protein resides in the virion. In terms of biological role, histone-like protein that is recruited to viral factories during viral replication and participates in viral DNA packaging and virion production probably by forming unstable nucleosome-like particles. May compact the viral DNA. The polypeptide is Histone doublet miniH2B-H2A (Melbournevirus (MelV)).